The chain runs to 226 residues: UPF0758 protein SPJ_1027 (226 aa).

Positions 103–225 (SILSSQKLAK…YFSYREKTDL (123 aa)) constitute an MPN domain. 3 residues coordinate Zn(2+): His-174, His-176, and Asp-187. The short motif at 174–187 (HNHPSGAVAPSQND) is the JAMM motif element.

Belongs to the UPF0758 family.

In Streptococcus pneumoniae (strain JJA), this protein is UPF0758 protein SPJ_1027.